The chain runs to 953 residues: Anion exchange protein 4 (953 aa).

The disordered stretch occupies residues 20 to 41 (SEQLDGDLGPGSGLDGPSDIDN). 4 helical membrane passes run 385 to 405 (AVLYIYLATVTNAITFGGLLG), 413 to 433 (GVLESFLGTAVAGATFCLMAG), 470 to 490 (VGIWVATFCLALVATEASLLV), and 501 to 521 (FCALISLIFIYDAVGKMLNLI). The segment at 385 to 953 (AVLYIYLATV…KAPEINISVN (569 aa)) is membrane (anion exchange). N-linked (GlcNAc...) asparagine glycans are attached at residues N546 and N570. The next 7 helical transmembrane spans lie at 594-614 (VPDIAFFSLLLFFTSFLCAIA), 635-655 (FSSVLAILLGCGLDAFLGLAT), 682-702 (PWWLSVAAALPALLLSILIFM), 728-748 (LFCVAVLMLFTSALGLPWYVS), 785-805 (GLVVFILTGVSIFLAPVLKFI), 807-827 (MPVLYGIFLYMGVAALSSMQF), and 869-889 (LWVIKSTPAAIVFPLMLLGLV). Positions 916 to 927 (KTIPENRPEPEH) are enriched in basic and acidic residues. Residues 916–938 (KTIPENRPEPEHLFSGNDSENSE) are disordered. N932 and N949 each carry an N-linked (GlcNAc...) asparagine glycan.

Belongs to the anion exchanger (TC 2.A.31) family. As to expression, expressed in kidney and gastrointestinal tract. In kidney, it is highly expressed in the cortex, expressed at intermediate level in the outer medulla and not expressed in the inner medulla. It is expressed in the cecum, while it is absent in other segments of gastrointestinal tract. Highly expressed in the cortical collecting duct (CCD). Expressed in both alpha-intercalated cells and beta-intercalated cells in the CCD (at protein level).

The protein resides in the basolateral cell membrane. The catalysed reaction is 2 hydrogencarbonate(out) + chloride(in) + Na(+)(out) = 2 hydrogencarbonate(in) + chloride(out) + Na(+)(in). It catalyses the reaction K(+)(in) + 2 hydrogencarbonate(in) + chloride(out) = K(+)(out) + 2 hydrogencarbonate(out) + chloride(in). The enzyme catalyses Li(+)(in) + 2 hydrogencarbonate(in) + chloride(out) = Li(+)(out) + 2 hydrogencarbonate(out) + chloride(in). It carries out the reaction Rb(+)(in) + 2 hydrogencarbonate(in) + chloride(out) = Rb(+)(out) + 2 hydrogencarbonate(out) + chloride(in). The catalysed reaction is Cs(+)(in) + 2 hydrogencarbonate(in) + chloride(out) = Cs(+)(out) + 2 hydrogencarbonate(out) + chloride(in). 4,4'-diisothiocyanatodihydrostilbene-2,2'- disulfonic acid (H2DIDS) potently inhibits chloride/hydrogencarbonate antiporter activity with 50% inhibition at about 5 uM. Completely inhibits chloride/hydrogencarbonate antiporter activity at 200 uM of 4,4'-diisothiocyano-trans-stilbene-2,2'-disulfonic acid (DIDS). Functionally, electroneutral Cl(-)/HCO3(-) antiporter that favors chloride ion entry and efflux of hydrogencarbonate and sodium ion across the basolateral membrane and may participate in salivary secretion. Also mediates Cl(-)/HCO3(-) exchange activity in the presence of K(+) as well as Cs(+), Li(+), and Rb(+). Does not contribute to Cl(-)/HCO3(-) exchanger in the apical membrane of the upper villous epithelium. This chain is Anion exchange protein 4, found in Rattus norvegicus (Rat).